Consider the following 297-residue polypeptide: Undecaprenyl-diphosphatase (297 aa).

Helical transmembrane passes span 39–59 (PGAA…LIYF), 85–105 (ARLA…GLTL), 113–133 (FRSL…LLVV), 151–171 (GILI…RSGT), 190–210 (SFLL…KHLL), 220–240 (ALWV…AWLL), and 249–269 (LVFV…LQTG).

Belongs to the UppP family.

It localises to the cell inner membrane. It carries out the reaction di-trans,octa-cis-undecaprenyl diphosphate + H2O = di-trans,octa-cis-undecaprenyl phosphate + phosphate + H(+). Its function is as follows. Catalyzes the dephosphorylation of undecaprenyl diphosphate (UPP). Confers resistance to bacitracin. This chain is Undecaprenyl-diphosphatase, found in Myxococcus xanthus (strain DK1622).